The primary structure comprises 83 residues: Cardiotoxin 7a (83 aa).

Positions 1-21 (MKTLLLTLVVVTIVCLDLGYT) are cleaved as a signal peptide. 4 disulfide bridges follow: cysteine 24-cysteine 43, cysteine 36-cysteine 61, cysteine 65-cysteine 76, and cysteine 77-cysteine 82.

The protein belongs to the three-finger toxin family. Short-chain subfamily. Orphan group XV sub-subfamily. As to expression, expressed by the venom gland.

Its subcellular location is the secreted. The protein localises to the target cell membrane. Its function is as follows. Has low cytotoxic activity. The chain is Cardiotoxin 7a from Naja atra (Chinese cobra).